The primary structure comprises 265 residues: Tryptophan synthase alpha chain (265 aa).

Residues Glu-49 and Asp-60 each act as proton acceptor in the active site.

This sequence belongs to the TrpA family. As to quaternary structure, tetramer of two alpha and two beta chains.

The enzyme catalyses (1S,2R)-1-C-(indol-3-yl)glycerol 3-phosphate + L-serine = D-glyceraldehyde 3-phosphate + L-tryptophan + H2O. It functions in the pathway amino-acid biosynthesis; L-tryptophan biosynthesis; L-tryptophan from chorismate: step 5/5. The alpha subunit is responsible for the aldol cleavage of indoleglycerol phosphate to indole and glyceraldehyde 3-phosphate. The protein is Tryptophan synthase alpha chain of Polynucleobacter asymbioticus (strain DSM 18221 / CIP 109841 / QLW-P1DMWA-1) (Polynucleobacter necessarius subsp. asymbioticus).